The following is a 169-amino-acid chain: Putative pre-16S rRNA nuclease (169 aa).

A compositionally biased stretch (basic and acidic residues) spans 1 to 19 (MTDSDHRLPDRPGEGDPGR). Positions 1 to 24 (MTDSDHRLPDRPGEGDPGRGRRIG) are disordered.

It belongs to the YqgF nuclease family.

The protein resides in the cytoplasm. Its function is as follows. Could be a nuclease involved in processing of the 5'-end of pre-16S rRNA. This is Putative pre-16S rRNA nuclease from Mycobacterium sp. (strain KMS).